An 840-amino-acid chain; its full sequence is Phosphatidylglycerol lysyltransferase (840 aa).

The Cytoplasmic portion of the chain corresponds to Met-1–Lys-8. Residues Leu-9 to Leu-29 form a helical membrane-spanning segment. Over Tyr-30–Trp-52 the chain is Extracellular. The helical transmembrane segment at Leu-53–Ile-73 threads the bilayer. The Cytoplasmic portion of the chain corresponds to Leu-74–Arg-89. Residues Val-90–Gly-110 form a helical membrane-spanning segment. The Extracellular portion of the chain corresponds to Val-111 to Tyr-129. The helical transmembrane segment at Ile-130 to Leu-150 threads the bilayer. At Arg-151–Glu-161 the chain is on the cytoplasmic side. Residues Ile-162–Tyr-182 traverse the membrane as a helical segment. The Extracellular segment spans residues Thr-183–Thr-200. A helical membrane pass occupies residues Val-201–Val-221. Over Asp-222–Thr-229 the chain is Cytoplasmic. The helical transmembrane segment at Phe-230 to Phe-250 threads the bilayer. The Extracellular portion of the chain corresponds to Gly-251 to Lys-270. Residues Ile-271–Leu-291 form a helical membrane-spanning segment. Residues Ile-292 to Ser-337 lie on the Cytoplasmic side of the membrane. A helical membrane pass occupies residues Leu-338–Tyr-358. The Extracellular segment spans residues Asp-359–His-366. A helical membrane pass occupies residues Phe-367–Val-387. The Cytoplasmic segment spans residues Arg-388 to Lys-392. The helical transmembrane segment at Gly-393–Ile-413 threads the bilayer. Topologically, residues Tyr-414–Thr-415 are extracellular. The helical transmembrane segment at Tyr-416–Tyr-436 threads the bilayer. Residues Gln-437–Lys-450 lie on the Cytoplasmic side of the membrane. The chain crosses the membrane as a helical span at residues Leu-451 to Gly-471. Residues Thr-472–Arg-489 lie on the Extracellular side of the membrane. The helical transmembrane segment at Tyr-490–Phe-510 threads the bilayer. Over Asp-511 to Lys-840 the chain is Cytoplasmic.

It belongs to the LPG synthase family.

The protein resides in the cell membrane. The catalysed reaction is L-lysyl-tRNA(Lys) + a 1,2-diacyl-sn-glycero-3-phospho-(1'-sn-glycerol) = a 1,2-diacyl-sn-glycero-3-phospho-1'-(3'-O-L-lysyl)-sn-glycerol + tRNA(Lys). Functionally, catalyzes the transfer of a lysyl group from L-lysyl-tRNA(Lys) to membrane-bound phosphatidylglycerol (PG), which produces lysylphosphatidylglycerol (LPG), a major component of the bacterial membrane with a positive net charge. LPG synthesis contributes to bacterial virulence as it is involved in the resistance mechanism against cationic antimicrobial peptides (CAMP) produces by the host's immune system (defensins, cathelicidins) and by the competing microorganisms (bacteriocins). In fact, the modification of anionic phosphatidylglycerol with positively charged L-lysine results in repulsion of the peptides. The polypeptide is Phosphatidylglycerol lysyltransferase (mprF) (Staphylococcus epidermidis (strain ATCC 35984 / DSM 28319 / BCRC 17069 / CCUG 31568 / BM 3577 / RP62A)).